A 376-amino-acid chain; its full sequence is 23S rRNA (uracil(747)-C(5))-methyltransferase RlmC (376 aa).

The [4Fe-4S] cluster site is built by cysteine 3, cysteine 11, cysteine 14, and cysteine 88. Residues glutamine 213, phenylalanine 242, glutamate 263, and asparagine 308 each contribute to the S-adenosyl-L-methionine site. Cysteine 335 acts as the Nucleophile in catalysis.

Belongs to the class I-like SAM-binding methyltransferase superfamily. RNA M5U methyltransferase family. RlmC subfamily.

It carries out the reaction uridine(747) in 23S rRNA + S-adenosyl-L-methionine = 5-methyluridine(747) in 23S rRNA + S-adenosyl-L-homocysteine + H(+). Catalyzes the formation of 5-methyl-uridine at position 747 (m5U747) in 23S rRNA. The sequence is that of 23S rRNA (uracil(747)-C(5))-methyltransferase RlmC from Vibrio vulnificus (strain YJ016).